The following is an 86-amino-acid chain: Small ribosomal subunit protein bS16 (86 aa).

This sequence belongs to the bacterial ribosomal protein bS16 family.

This Thermoanaerobacter sp. (strain X514) protein is Small ribosomal subunit protein bS16.